A 271-amino-acid chain; its full sequence is MLPTVFIVSDGTGITAETFAHSILSQFDQKFRLVRVPFVDSLDKAYATVEKINEAAVHDGRRAIVFTTLVDSESNDIVKRSNALVLDMFQRFVEPLEQELELKSSHAMGRGHQNADTEEYKTRIEAINFSLAHDDGQSNRNLSEADVILVGVSRSGKTPTSLYLAMQYGVKAANYPLIPEDFERGKLPSALAAYSEKLFGLSIDPQRLSEIRNERRPGSKYAAPENCRYEINEAEAMMRREGIKWLSSTHKSIEEIATTILQEIRLDRQSY.

151–158 (GVSRSGKT) serves as a coordination point for ADP.

It belongs to the pyruvate, phosphate/water dikinase regulatory protein family. PSRP subfamily.

It catalyses the reaction [pyruvate, water dikinase] + ADP = [pyruvate, water dikinase]-phosphate + AMP + H(+). It carries out the reaction [pyruvate, water dikinase]-phosphate + phosphate + H(+) = [pyruvate, water dikinase] + diphosphate. Functionally, bifunctional serine/threonine kinase and phosphorylase involved in the regulation of the phosphoenolpyruvate synthase (PEPS) by catalyzing its phosphorylation/dephosphorylation. The chain is Putative phosphoenolpyruvate synthase regulatory protein from Burkholderia lata (strain ATCC 17760 / DSM 23089 / LMG 22485 / NCIMB 9086 / R18194 / 383).